Consider the following 207-residue polypeptide: Holliday junction branch migration complex subunit RuvA (207 aa).

The interval 1–63 (MISSLRGTVL…EDSLQLFGFS (63 aa)) is domain I. A domain II region spans residues 64–142 (GLEQLQVFEL…ACRRPSAPSA (79 aa)). The flexible linker stretch occupies residues 142–146 (ARRPS). Residues 147 to 207 (APSSVSDSVL…RLGPANQAAR (61 aa)) are domain III.

It belongs to the RuvA family. Homotetramer. Forms an RuvA(8)-RuvB(12)-Holliday junction (HJ) complex. HJ DNA is sandwiched between 2 RuvA tetramers; dsDNA enters through RuvA and exits via RuvB. An RuvB hexamer assembles on each DNA strand where it exits the tetramer. Each RuvB hexamer is contacted by two RuvA subunits (via domain III) on 2 adjacent RuvB subunits; this complex drives branch migration. In the full resolvosome a probable DNA-RuvA(4)-RuvB(12)-RuvC(2) complex forms which resolves the HJ.

The protein localises to the cytoplasm. In terms of biological role, the RuvA-RuvB-RuvC complex processes Holliday junction (HJ) DNA during genetic recombination and DNA repair, while the RuvA-RuvB complex plays an important role in the rescue of blocked DNA replication forks via replication fork reversal (RFR). RuvA specifically binds to HJ cruciform DNA, conferring on it an open structure. The RuvB hexamer acts as an ATP-dependent pump, pulling dsDNA into and through the RuvAB complex. HJ branch migration allows RuvC to scan DNA until it finds its consensus sequence, where it cleaves and resolves the cruciform DNA. The polypeptide is Holliday junction branch migration complex subunit RuvA (Leifsonia xyli subsp. xyli (strain CTCB07)).